We begin with the raw amino-acid sequence, 461 residues long: MEHRLWGGRFSEPTAAEMRRFNDSFHFDVRLAEVDIAGSIAWAGALLQAGLINETEHADLVRGLELVRAEFANGSFVAAAGDEDIHTAVERRLRELIGDAALKLHTGRSRNDQVATDMRLYTIGIARQLDRRLRDLQLALLAQAEQHTATVMPGYTHLQRAQPITFGHWCLAYVEMFARDRSRLNDAIRRMRVLPLGAGALAGNSLGVERERLTELLDEFDELSANSLDAVSDRDFVAEVLFACALIGVHLSRLAEDVILYASAEFGFLELADAYSTGSSLMPQKKNPDSMELLRGKSGRLLGNLVALLTVLKGLPLTYNKDMQEDKEPLFDSFDTLDLGLQVAAAAIATMTVRPERMAAALDDAMLATDLADELVRRGVPFRVAHSKVGQLVQRALTRGVSLRQLPLADYQAVEPSLDASIYDVFDMQRSVAQKASYGGTAPQRVREQCARWRDSLLNDE.

Belongs to the lyase 1 family. Argininosuccinate lyase subfamily.

The protein resides in the cytoplasm. The catalysed reaction is 2-(N(omega)-L-arginino)succinate = fumarate + L-arginine. The protein operates within amino-acid biosynthesis; L-arginine biosynthesis; L-arginine from L-ornithine and carbamoyl phosphate: step 3/3. In Chloroflexus aurantiacus (strain ATCC 29366 / DSM 635 / J-10-fl), this protein is Argininosuccinate lyase.